Consider the following 151-residue polypeptide: Ribosome maturation factor RimP (151 aa).

Belongs to the RimP family.

The protein resides in the cytoplasm. In terms of biological role, required for maturation of 30S ribosomal subunits. The sequence is that of Ribosome maturation factor RimP from Caldanaerobacter subterraneus subsp. tengcongensis (strain DSM 15242 / JCM 11007 / NBRC 100824 / MB4) (Thermoanaerobacter tengcongensis).